Consider the following 237-residue polypeptide: UDP-2,3-diacylglucosamine hydrolase (237 aa).

Residues aspartate 9, histidine 11, aspartate 42, asparagine 80, and histidine 115 each contribute to the Mn(2+) site. 80–81 is a substrate binding site; that stretch reads NR. Substrate is bound by residues aspartate 123, serine 161, lysine 165, lysine 168, and histidine 196. Residues histidine 196 and histidine 198 each coordinate Mn(2+).

Belongs to the LpxH family. It depends on Mn(2+) as a cofactor.

It localises to the cell inner membrane. It carries out the reaction UDP-2-N,3-O-bis[(3R)-3-hydroxytetradecanoyl]-alpha-D-glucosamine + H2O = 2-N,3-O-bis[(3R)-3-hydroxytetradecanoyl]-alpha-D-glucosaminyl 1-phosphate + UMP + 2 H(+). Its pathway is glycolipid biosynthesis; lipid IV(A) biosynthesis; lipid IV(A) from (3R)-3-hydroxytetradecanoyl-[acyl-carrier-protein] and UDP-N-acetyl-alpha-D-glucosamine: step 4/6. Hydrolyzes the pyrophosphate bond of UDP-2,3-diacylglucosamine to yield 2,3-diacylglucosamine 1-phosphate (lipid X) and UMP by catalyzing the attack of water at the alpha-P atom. Involved in the biosynthesis of lipid A, a phosphorylated glycolipid that anchors the lipopolysaccharide to the outer membrane of the cell. The protein is UDP-2,3-diacylglucosamine hydrolase of Haemophilus influenzae (strain PittGG).